Consider the following 156-residue polypeptide: V-type proton ATPase 16 kDa proteolipid subunit c (156 aa).

Topologically, residues 1–7 are lumenal; that stretch reads MAENPIY. A helical membrane pass occupies residues 8 to 30; that stretch reads GPFFGVMGAASAIIFSALGAAYG. The Cytoplasmic portion of the chain corresponds to 31–52; that stretch reads TAKSGTGIAAMSVMRPELIMKS. A helical transmembrane segment spans residues 53–73; the sequence is IIPVVMAGIIAIYGLVVAVLI. Topologically, residues 74–92 are lumenal; that stretch reads AGSLDAPSNNYTLYKGFIH. The helical transmembrane segment at 93–114 threads the bilayer; sequence LGAGLAVGFSGLAAGFAIGIVG. Residues 115–126 are Cytoplasmic-facing; it reads DAGVRGTAQQPR. Residues 127 to 152 traverse the membrane as a helical segment; the sequence is LFVGMILILIFAEVLGLYGLIVAIYL. Residues 153–156 are Lumenal-facing; that stretch reads YTKQ.

The protein belongs to the V-ATPase proteolipid subunit family. As to quaternary structure, V-ATPase is a heteromultimeric enzyme made up of two complexes: the ATP-hydrolytic V1 complex and the proton translocation V0 complex. The V1 complex consists of three catalytic AB heterodimers that form a heterohexamer, three peripheral stalks each consisting of EG heterodimers, one central rotor including subunits D and F, and the regulatory subunits C and H. The proton translocation complex V0 consists of the proton transport subunit a, a ring of proteolipid subunits c9c'', rotary subunit d, subunits e and f, and the accessory subunits VhaAC45 and ATP6AP2.

The protein resides in the membrane. Its function is as follows. Proton-conducting pore forming subunit of the V0 complex of vacuolar(H+)-ATPase (V-ATPase), a multisubunit enzyme composed of a peripheral complex (V1) that hydrolyzes ATP and a membrane integral complex (V0) that translocates protons. V-ATPase is responsible for acidifying and maintaining the pH of intracellular compartments and in some cell types, is targeted to the plasma membrane, where it is responsible for acidifying the extracellular environment. The sequence is that of V-type proton ATPase 16 kDa proteolipid subunit c (VHA16) from Heliothis virescens (Tobacco budworm moth).